The sequence spans 363 residues: MSPHFPALTPDQKKELADIAQRIVASGKGILAADESVGTMGKRLTQIGLENTDEHRRFYRQLLFTTDPSIKEHIGGIIFFHETMYQKTDGGVPFVKLVKDNGILVGIKVDKGVVPLAGTNGEGTTQGLDGLAERCAQYKKDGADFAKWRCVLKISPNTPSRLSIVENANVLARYATICQQNGLVPIVEPEILPDGDHDLKTCQYITEKVLAATYKALSDHHVYLEGTLLKPNMVTVGTAAPASTRPEQVAMATLTALRRTVPPAVPGITFLSGGQSEEDASIHLNAINKLHLIKPWALTFSYGRALQASVLKAWGGKKENLKAAQDELMRRAKINGQASKGEYKPTGTGAAAGESLFVANHAY.

The substrate site is built by arginine 56 and lysine 147. Residue lysine 230 is the Schiff-base intermediate with dihydroxyacetone-P of the active site.

It belongs to the class I fructose-bisphosphate aldolase family. In terms of assembly, homotetramer. Expressed mainly in the skeletal muscle, heart muscle, brain, and some other tissues, but probably not in liver.

It catalyses the reaction beta-D-fructose 1,6-bisphosphate = D-glyceraldehyde 3-phosphate + dihydroxyacetone phosphate. It participates in carbohydrate degradation; glycolysis; D-glyceraldehyde 3-phosphate and glycerone phosphate from D-glucose: step 4/4. The polypeptide is Fructose-bisphosphate aldolase, muscle type (Lethenteron camtschaticum (Japanese lamprey)).